The primary structure comprises 181 residues: Putative ankyrin repeat protein RBE_0150 (181 aa).

ANK repeat units follow at residues I50–T79, L83–A114, S118–T147, and L151–Y180.

The protein is Putative ankyrin repeat protein RBE_0150 of Rickettsia bellii (strain RML369-C).